Here is a 404-residue protein sequence, read N- to C-terminus: tRNA-specific 2-thiouridylase MnmA (404 aa).

ATP is bound by residues Gly42–Ser49 and Leu68. Cys129 acts as the Nucleophile in catalysis. A disulfide bridge links Cys129 with Cys239. Gly154 serves as a coordination point for ATP. The interval Lys189 to Gln191 is interaction with tRNA. The Cysteine persulfide intermediate role is filled by Cys239. The segment at Arg344–Tyr345 is interaction with tRNA.

This sequence belongs to the MnmA/TRMU family.

Its subcellular location is the cytoplasm. The catalysed reaction is S-sulfanyl-L-cysteinyl-[protein] + uridine(34) in tRNA + AH2 + ATP = 2-thiouridine(34) in tRNA + L-cysteinyl-[protein] + A + AMP + diphosphate + H(+). Its function is as follows. Catalyzes the 2-thiolation of uridine at the wobble position (U34) of tRNA, leading to the formation of s(2)U34. The chain is tRNA-specific 2-thiouridylase MnmA from Prochlorococcus marinus (strain NATL1A).